The sequence spans 266 residues: Gap junction beta-4 protein (266 aa).

An intramembrane segment occupies 2–13 (NWAFLQGLLSGV). The Cytoplasmic portion of the chain corresponds to 14 to 20 (NKYSTVL). Residues 21-40 (SRIWLSVVFIFRVLVYVVAA) form a helical membrane-spanning segment. At 41-73 (EEVWDDEQKDFVCNTKQPGCPNVCYDEFFPVSH) the chain is on the extracellular side. 3 disulfide bridges follow: Cys-53/Cys-175, Cys-60/Cys-169, and Cys-64/Cys-164. Residues 74–94 (VRLWALQLILVTCPSLLVVMH) traverse the membrane as a helical segment. Residues 95-130 (VAYREERERKHHLKHGPNAPSLYDNLSKKRGGLWWT) lie on the Cytoplasmic side of the membrane. The helical transmembrane segment at 131 to 151 (YLLSLIFKAAVDAGFLYIFHR) threads the bilayer. Over 152-184 (LYKDYDMPRVVACSVEPCPHTVDCYISRPTEKK) the chain is Extracellular. A helical transmembrane segment spans residues 185 to 205 (VFTYFMVTTAAICILLNLSEV). Topologically, residues 206–266 (FYLVGKRCME…SAPVDAGGYP (61 aa)) are cytoplasmic.

It belongs to the connexin family. Beta-type (group I) subfamily. As to quaternary structure, a hemichannel or connexon is composed of a hexamer of connexins. A functional gap junction is formed by the apposition of two hemichannels. Forms heteromeric channels with GJB2.

The protein localises to the cell membrane. Its subcellular location is the cell junction. It is found in the gap junction. Functionally, structural component of gap junctions. Gap junctions are dodecameric channels that connect the cytoplasm of adjoining cells. They are formed by the docking of two hexameric hemichannels, one from each cell membrane. Small molecules and ions diffuse from one cell to a neighboring cell via the central pore. This Homo sapiens (Human) protein is Gap junction beta-4 protein (GJB4).